A 247-amino-acid polypeptide reads, in one-letter code: Uridylate kinase (247 aa).

Position 19–22 (19–22 (KISG)) interacts with ATP. Residue Gly-61 coordinates UMP. 2 residues coordinate ATP: Gly-62 and Arg-66. UMP-binding positions include Asp-81 and 142 to 149 (TGNPFFTT). 4 residues coordinate ATP: Thr-169, Gln-170, Tyr-175, and Asp-178.

This sequence belongs to the UMP kinase family. Homohexamer.

The protein resides in the cytoplasm. It carries out the reaction UMP + ATP = UDP + ADP. It participates in pyrimidine metabolism; CTP biosynthesis via de novo pathway; UDP from UMP (UMPK route): step 1/1. Its activity is regulated as follows. Inhibited by UTP. Its function is as follows. Catalyzes the reversible phosphorylation of UMP to UDP. The sequence is that of Uridylate kinase from Wolbachia pipientis wMel.